An 88-amino-acid polypeptide reads, in one-letter code: Large ribosomal subunit protein bL27 (88 aa).

Positions 1–21 (MAHKKGASSSRNGRDSAAQRL) are disordered.

Belongs to the bacterial ribosomal protein bL27 family.

The sequence is that of Large ribosomal subunit protein bL27 from Mycobacterium marinum (strain ATCC BAA-535 / M).